The primary structure comprises 183 residues: Beta-defensin 129 (183 aa).

Residues 1 to 19 form the signal peptide; sequence MKLLFPIFASLMLQYQVNT. Cystine bridges form between C27-C53, C34-C48, and C38-C54. The disordered stretch occupies residues 142–183; the sequence is ATSAKSNTKESGDSATASPPPAPPPPNILPTPSLELEEAEEQ. Residues 159–170 are compositionally biased toward pro residues; it reads SPPPAPPPPNIL.

The protein belongs to the beta-defensin family.

Its subcellular location is the secreted. Functionally, has antibacterial activity. The chain is Beta-defensin 129 (DEFB129) from Macaca fascicularis (Crab-eating macaque).